Consider the following 289-residue polypeptide: Release factor glutamine methyltransferase (289 aa).

S-adenosyl-L-methionine-binding positions include 130–134 (GTGTG), D153, W182, and N196. Substrate is bound at residue 196–199 (NPPY).

Belongs to the protein N5-glutamine methyltransferase family. PrmC subfamily.

The enzyme catalyses L-glutaminyl-[peptide chain release factor] + S-adenosyl-L-methionine = N(5)-methyl-L-glutaminyl-[peptide chain release factor] + S-adenosyl-L-homocysteine + H(+). Functionally, methylates the class 1 translation termination release factors RF1/PrfA and RF2/PrfB on the glutamine residue of the universally conserved GGQ motif. This is Release factor glutamine methyltransferase from Agrobacterium fabrum (strain C58 / ATCC 33970) (Agrobacterium tumefaciens (strain C58)).